A 396-amino-acid chain; its full sequence is NADH-quinone oxidoreductase subunit D (396 aa).

It belongs to the complex I 49 kDa subunit family. NDH-1 is composed of 14 different subunits. Subunits NuoB, C, D, E, F, and G constitute the peripheral sector of the complex.

It localises to the cell inner membrane. It carries out the reaction a quinone + NADH + 5 H(+)(in) = a quinol + NAD(+) + 4 H(+)(out). NDH-1 shuttles electrons from NADH, via FMN and iron-sulfur (Fe-S) centers, to quinones in the respiratory chain. The immediate electron acceptor for the enzyme in this species is believed to be ubiquinone. Couples the redox reaction to proton translocation (for every two electrons transferred, four hydrogen ions are translocated across the cytoplasmic membrane), and thus conserves the redox energy in a proton gradient. The sequence is that of NADH-quinone oxidoreductase subunit D from Methylobacterium sp. (strain 4-46).